A 384-amino-acid polypeptide reads, in one-letter code: Small ribosomal subunit protein mS31 (384 aa).

The N-terminal 54 residues, Met1–Ser54, are a transit peptide targeting the mitochondrion. Positions Thr101–Arg136 are disordered. Residues Thr121–Arg136 are compositionally biased toward basic and acidic residues.

The protein belongs to the mitochondrion-specific ribosomal protein mS31 family. In terms of assembly, component of the mitochondrial ribosome small subunit (28S) which comprises a 12S rRNA and about 30 distinct proteins.

The protein localises to the mitochondrion. The polypeptide is Small ribosomal subunit protein mS31 (Mrps31) (Mus musculus (Mouse)).